The following is a 502-amino-acid chain: Cytochrome c-552 (502 aa).

The N-terminal stretch at 1–25 (MKYLTKSRVIATIAMLGCLSVSAWA) is a signal peptide. Residue His105 coordinates heme c. Cys133, Cys136, and Lys137 together coordinate heme. The heme c site is built by Cys171, Cys174, His175, Cys220, Cys223, and His224. Ca(2+)-binding residues include Glu226, Tyr227, Lys271, and Gln273. Residue Tyr227 coordinates substrate. His274 is a substrate binding site. Heme c-binding residues include His285, Cys292, Cys295, His296, His311, Cys324, Cys327, His328, and His403. The disordered stretch occupies residues 481-502 (RERGLLPEVTPKSVTTPKVDAK).

Belongs to the cytochrome c-552 family. Ca(2+) serves as cofactor. It depends on heme c as a cofactor.

It is found in the periplasm. The enzyme catalyses 6 Fe(III)-[cytochrome c] + NH4(+) + 2 H2O = 6 Fe(II)-[cytochrome c] + nitrite + 8 H(+). It functions in the pathway nitrogen metabolism; nitrate reduction (assimilation). Functionally, catalyzes the reduction of nitrite to ammonia, consuming six electrons in the process. This Haemophilus ducreyi (strain 35000HP / ATCC 700724) protein is Cytochrome c-552.